Reading from the N-terminus, the 1241-residue chain is DNA-directed RNA polymerase subunit beta (1241 aa).

Residues 1186–1210 (EDEIVPTAEKRSSNQDEEALELVDN) are disordered. Residues 1200–1210 (QDEEALELVDN) show a composition bias toward acidic residues.

Belongs to the RNA polymerase beta chain family. In terms of assembly, the RNAP catalytic core consists of 2 alpha, 1 beta, 1 beta' and 1 omega subunit. When a sigma factor is associated with the core the holoenzyme is formed, which can initiate transcription.

It catalyses the reaction RNA(n) + a ribonucleoside 5'-triphosphate = RNA(n+1) + diphosphate. Functionally, DNA-dependent RNA polymerase catalyzes the transcription of DNA into RNA using the four ribonucleoside triphosphates as substrates. In Clostridium novyi (strain NT), this protein is DNA-directed RNA polymerase subunit beta.